The sequence spans 157 residues: Mediator of RNA polymerase II transcription subunit 10 (157 aa).

It belongs to the Mediator complex subunit 10 family. Component of the Mediator complex, which is composed of at least 21 subunits that form three structurally distinct submodules. The Mediator head module contains MED6, MED8, MED11, SRB4/MED17, SRB5/MED18, ROX3/MED19, SRB2/MED20 and SRB6/MED22, the middle module contains MED1, MED4, NUT1/MED5, MED7, CSE2/MED9, NUT2/MED10, SRB7/MED21 and SOH1/MED31, and the tail module contains MED2, PGD1/MED3, RGR1/MED14, GAL11/MED15 and SIN4/MED16. The head and the middle modules interact directly with RNA polymerase II, whereas the elongated tail module interacts with gene-specific regulatory proteins. NUT2/MED10 interacts directly with SRB7/MED21.

Its subcellular location is the nucleus. Its function is as follows. Component of the Mediator complex, a coactivator involved in the regulated transcription of nearly all RNA polymerase II-dependent genes. Mediator functions as a bridge to convey information from gene-specific regulatory proteins to the basal RNA polymerase II transcription machinery. The Mediator complex, having a compact conformation in its free form, is recruited to promoters by direct interactions with regulatory proteins and serves for the assembly of a functional preinitiation complex with RNA polymerase II and the general transcription factors. The Mediator complex unfolds to an extended conformation and partially surrounds RNA polymerase II, specifically interacting with the unphosphorylated form of the C-terminal domain (CTD) of RNA polymerase II. The Mediator complex dissociates from the RNA polymerase II holoenzyme and stays at the promoter when transcriptional elongation begins. This chain is Mediator of RNA polymerase II transcription subunit 10 (NUT2), found in Saccharomyces cerevisiae (strain ATCC 204508 / S288c) (Baker's yeast).